We begin with the raw amino-acid sequence, 735 residues long: MEVCNCIEPQWPADELLMKYQYISDFFIAVAYFSIPLELIYFVKKSAVFPYRWVLVQFGAFIVLCGATHLINLWTFTTHSRTVALVMTTAKVLTAVVSCATALMLVHIIPDLLSVKTRELFLKNKAAELDREMGLIRTQEETGRHVRMLTHEIRSTLDRHTILKTTLVELGRTLALEECALWMPTRTGLELQLSYTLRQQHPVEYTVPIQLPVINQVFGTSRAVKISPNSPVARLRPVSGKYLLGEVVAVRVPLLHLSNFQINDWPELSTKRYALMVLMLPSDSARQWHVHELELVEVVADQVAVALSHAAILEESMRARDLLMEQNVALDIARREAETAIRARNDFLAVMNHEMRTPMHAIIALSSLLQETELTPEQRLMVETVLKSSSLLATLMNDVLDLSRLEDGSLQLELGTFNLHTLFREVLNLIKPIAVVKKLPITLNLAPDLPEFVVGDEKRLMQIILNIVGNAVKFSKQGSISVTALVTKSDNRAPPDFFVVPTGSHFYLRVKVKDLGAGINPQDIPKLFTKFAQTQSLATRSSGGSGLGLAISKRFVNLMEGNIWIESEGVGKGCTAIFDVKLAISNESKQSGIPKVPANPQHVNFAGLKVLVMDENGVSRMVTKGLLVHLGCEVTTVSSNEECLRVVSHEHRVVFMDVCTPGVENYQIALRIHEKFTKRHQRPLLVALTGNTDKSTKEKCMSFGLDGVLLKPVSLDNMRNVLSDRLEHRVLYEAM.

A run of 3 helical transmembrane segments spans residues 23-43, 54-74, and 92-112; these read ISDFFIAVAYFSIPLELIYFV, VLVQFGAFIVLCGATHLINLW, and VLTAVVSCATALMLVHIIPDL. The Cu cation site is built by Cys-65 and His-69. The region spanning 158–307 is the GAF domain; that stretch reads DRHTILKTTL…VVADQVAVAL (150 aa). The Histidine kinase domain occupies 350 to 586; sequence VMNHEMRTPM…IFDVKLAISN (237 aa). At His-353 the chain carries Phosphohistidine; by autocatalysis. One can recognise a Response regulatory domain in the interval 609-726; sequence KVLVMDENGV…NMRNVLSDRL (118 aa). A 4-aspartylphosphate modification is found at Asp-657. Lys-711 participates in a covalent cross-link: Glycyl lysine isopeptide (Lys-Gly) (interchain with G-Cter in ubiquitin).

Belongs to the ethylene receptor family. Homodimer; disulfide-linked. Cu cation serves as cofactor. In terms of processing, activation probably requires a transfer of a phosphate group between a His in the transmitter domain and an Asp of the receiver domain.

It is found in the endoplasmic reticulum membrane. It carries out the reaction ATP + protein L-histidine = ADP + protein N-phospho-L-histidine.. Its function is as follows. May act early in the ethylene signal transduction pathway, possibly as an ethylene receptor, or as a regulator of the pathway. This chain is Ethylene receptor 1 (ETR1), found in Brassica oleracea (Wild cabbage).